We begin with the raw amino-acid sequence, 435 residues long: Transmembrane protein 130 (435 aa).

The first 24 residues, 1-24 (MAQAVWSRLGRILWLACLLPWAPA), serve as a signal peptide directing secretion. Topologically, residues 25–339 (GVAAGLYELN…IQVWPSRIQP (315 aa)) are extracellular. N-linked (GlcNAc...) asparagine glycans are attached at residues Asn34, Asn197, and Asn300. The PKD domain occupies 147-233 (WPSSYLTKTV…AVKQKTGDFS (87 aa)). The helical transmembrane segment at 340–360 (AVFAFPCATLITVMLAFIMYM) threads the bilayer. The Cytoplasmic segment spans residues 361-435 (TLRNATQQKD…LYKSVKTYTV (75 aa)).

The protein resides in the golgi apparatus membrane. The sequence is that of Transmembrane protein 130 (TMEM130) from Homo sapiens (Human).